The chain runs to 228 residues: Peptide deformylase (228 aa).

Disordered regions lie at residues 1 to 28 (MSQD…EGAV) and 116 to 138 (GVPK…EPDR). Polar residues-rich tracts occupy residues 8–18 (TGCNTHSNTHS) and 123–133 (NKQQANNSTSC). Residues Cys-141 and His-183 each coordinate Fe cation. Glu-184 is an active-site residue. His-187 contacts Fe cation.

Belongs to the polypeptide deformylase family. Fe(2+) is required as a cofactor.

It carries out the reaction N-terminal N-formyl-L-methionyl-[peptide] + H2O = N-terminal L-methionyl-[peptide] + formate. Its function is as follows. Removes the formyl group from the N-terminal Met of newly synthesized proteins. Requires at least a dipeptide for an efficient rate of reaction. N-terminal L-methionine is a prerequisite for activity but the enzyme has broad specificity at other positions. The polypeptide is Peptide deformylase (Tropheryma whipplei (strain Twist) (Whipple's bacillus)).